Consider the following 342-residue polypeptide: Dihydroorotase (342 aa).

2 residues coordinate Zn(2+): H13 and H15. Residues 15 to 17 (HLR) and N41 contribute to the substrate site. Zn(2+) contacts are provided by K98, H135, and H173. At K98 the chain carries N6-carboxylysine. Position 135 (H135) interacts with substrate. L218 lines the substrate pocket. D246 serves as a coordination point for Zn(2+). The active site involves D246. Residues H250 and A262 each coordinate substrate.

Belongs to the metallo-dependent hydrolases superfamily. DHOase family. Class II DHOase subfamily. Homodimer. Requires Zn(2+) as cofactor.

It carries out the reaction (S)-dihydroorotate + H2O = N-carbamoyl-L-aspartate + H(+). The protein operates within pyrimidine metabolism; UMP biosynthesis via de novo pathway; (S)-dihydroorotate from bicarbonate: step 3/3. Its function is as follows. Catalyzes the reversible cyclization of carbamoyl aspartate to dihydroorotate. The protein is Dihydroorotase of Vibrio campbellii (strain ATCC BAA-1116).